We begin with the raw amino-acid sequence, 404 residues long: Probable cysteine desulfurase (404 aa).

At K221 the chain carries N6-(pyridoxal phosphate)lysine. C360 serves as the catalytic Cysteine persulfide intermediate.

This sequence belongs to the class-V pyridoxal-phosphate-dependent aminotransferase family. Csd subfamily. Requires pyridoxal 5'-phosphate as cofactor.

The catalysed reaction is (sulfur carrier)-H + L-cysteine = (sulfur carrier)-SH + L-alanine. Functionally, catalyzes the removal of elemental sulfur and selenium atoms from L-cysteine, L-cystine, L-selenocysteine, and L-selenocystine to produce L-alanine. The sequence is that of Probable cysteine desulfurase (csd) from Treponema pallidum (strain Nichols).